A 566-amino-acid chain; its full sequence is Type 2 DNA topoisomerase 6 subunit B (566 aa).

Residues Asn48, Asp80, 101–102 (TK), 111–118 (GQQGIGIS), and Lys475 each bind ATP.

It belongs to the TOP6B family. In terms of assembly, homodimer. Heterotetramer of two Top6A and two Top6B chains.

The catalysed reaction is ATP-dependent breakage, passage and rejoining of double-stranded DNA.. In terms of biological role, relaxes both positive and negative superturns and exhibits a strong decatenase activity. This is Type 2 DNA topoisomerase 6 subunit B from Thermococcus sibiricus (strain DSM 12597 / MM 739).